An 84-amino-acid chain; its full sequence is Magnetosome protein MamG (84 aa).

Over 1–3 (MIK) the chain is Cytoplasmic. The chain crosses the membrane as a helical span at residues 4 to 24 (GIAGVGGTALGVGGGVAAPPV). Over 25–40 (SAAAVGSTLLAGKGVC) the chain is Lumenal. The tract at residues 41–48 (LGLGLGLG) is LG repeat. The helical transmembrane segment at 41–61 (LGLGLGLGAWGPVLLGVAGLA) threads the bilayer. Residues 62–84 (CAASLCDYLKNRKAQAEASAEPA) lie on the Cytoplasmic side of the membrane.

The protein belongs to the magnetosome MamG (TC 9.B.95) protein family.

It localises to the magnetosome membrane. Plays a role in regulating magnetite crystal size. This is Magnetosome protein MamG from Magnetospirillum gryphiswaldense (strain DSM 6361 / JCM 21280 / NBRC 15271 / MSR-1).